The following is a 201-amino-acid chain: dTTP/UTP pyrophosphatase (201 aa).

D81 acts as the Proton acceptor in catalysis.

This sequence belongs to the Maf family. YhdE subfamily. A divalent metal cation serves as cofactor.

It localises to the cytoplasm. The catalysed reaction is dTTP + H2O = dTMP + diphosphate + H(+). It carries out the reaction UTP + H2O = UMP + diphosphate + H(+). Functionally, nucleoside triphosphate pyrophosphatase that hydrolyzes dTTP and UTP. May have a dual role in cell division arrest and in preventing the incorporation of modified nucleotides into cellular nucleic acids. This chain is dTTP/UTP pyrophosphatase, found in Dechloromonas aromatica (strain RCB).